The chain runs to 88 residues: Protein Aeq5-like1 (88 aa).

Positions 1 to 20 (MKSVIAVLVLSLVLVNFTQA) are cleaved as a signal peptide. Cystine bridges form between C29/C68, C33/C64, C40/C56, and C47/C53.

As to expression, is expressed in the ectodermal cells of gastrulae and planulae. Is also noticeable in the endoderm in late planulae. In the primary polyps, is expressed in both ectoderm (sensory neurons) and endoderm (ganglions). Is not expressed in nematocytes.

Its function is as follows. Probable neuropeptide. The sequence is that of Protein Aeq5-like1 from Nematostella vectensis (Starlet sea anemone).